We begin with the raw amino-acid sequence, 146 residues long: Snaclec alboaggregin-B subunit beta (146 aa).

An N-terminal signal peptide occupies residues 1 to 23; the sequence is MGRFIFGSFGLLVLFLSLSGTGA. The C-type lectin domain maps to 24-143; it reads DCPSDWSSYD…CSRTYPFVCK (120 aa). Disulfide bonds link Cys-25–Cys-36, Cys-53–Cys-142, and Cys-119–Cys-134.

The protein belongs to the snaclec family. In terms of assembly, heterodimer of subunits alpha and beta; disulfide-linked. In terms of tissue distribution, expressed by the venom gland.

Its subcellular location is the secreted. In terms of biological role, weakly agglutinates platelets at high doses by binding to GPIbalpha (GP1BA). The protein is Snaclec alboaggregin-B subunit beta of Trimeresurus albolabris (White-lipped pit viper).